Reading from the N-terminus, the 437-residue chain is Trigger factor (437 aa).

In terms of domain architecture, PPIase FKBP-type spans 161–246; that stretch reads GDQVNINFVG…VNSVSEAVLP (86 aa).

The protein belongs to the FKBP-type PPIase family. Tig subfamily.

The protein resides in the cytoplasm. It catalyses the reaction [protein]-peptidylproline (omega=180) = [protein]-peptidylproline (omega=0). In terms of biological role, involved in protein export. Acts as a chaperone by maintaining the newly synthesized protein in an open conformation. Functions as a peptidyl-prolyl cis-trans isomerase. The polypeptide is Trigger factor (Cellvibrio japonicus (strain Ueda107) (Pseudomonas fluorescens subsp. cellulosa)).